The following is a 420-amino-acid chain: Serine hydroxymethyltransferase (420 aa).

(6S)-5,6,7,8-tetrahydrofolate is bound by residues Leu121 and 125–127; that span reads GHL. An N6-(pyridoxal phosphate)lysine modification is found at Lys230. 355 to 357 lines the (6S)-5,6,7,8-tetrahydrofolate pocket; that stretch reads SPF.

This sequence belongs to the SHMT family. Homodimer. It depends on pyridoxal 5'-phosphate as a cofactor.

The protein resides in the cytoplasm. The catalysed reaction is (6R)-5,10-methylene-5,6,7,8-tetrahydrofolate + glycine + H2O = (6S)-5,6,7,8-tetrahydrofolate + L-serine. Its pathway is one-carbon metabolism; tetrahydrofolate interconversion. It functions in the pathway amino-acid biosynthesis; glycine biosynthesis; glycine from L-serine: step 1/1. Functionally, catalyzes the reversible interconversion of serine and glycine with tetrahydrofolate (THF) serving as the one-carbon carrier. This reaction serves as the major source of one-carbon groups required for the biosynthesis of purines, thymidylate, methionine, and other important biomolecules. Also exhibits THF-independent aldolase activity toward beta-hydroxyamino acids, producing glycine and aldehydes, via a retro-aldol mechanism. In Streptococcus mutans serotype c (strain ATCC 700610 / UA159), this protein is Serine hydroxymethyltransferase.